A 169-amino-acid chain; its full sequence is uncharacterized protein (169 aa).

The helical transmembrane segment at 55–77 (SLFIFKAVMILHTCLIVKSIRIF) threads the bilayer.

Its subcellular location is the membrane. This is an uncharacterized protein from Saccharomyces cerevisiae (strain ATCC 204508 / S288c) (Baker's yeast).